A 147-amino-acid polypeptide reads, in one-letter code: Hemoglobin subunit beta (147 aa).

The residue at position 2 (valine 2) is an N-acetylvaline. The region spanning 3–147 (HMSAEEKGIV…VAAALAHKYH (145 aa)) is the Globin domain. Threonine 13 is subject to Phosphothreonine. Serine 45 carries the post-translational modification Phosphoserine. The residue at position 60 (lysine 60) is an N6-acetyllysine. Residue histidine 64 coordinates heme b. At lysine 83 the chain carries N6-acetyllysine. Residue histidine 93 participates in heme b binding. Cysteine 94 is subject to S-nitrosocysteine. Position 145 is an N6-acetyllysine (lysine 145).

Belongs to the globin family. Heterotetramer of two alpha chains and two beta chains. As to expression, red blood cells.

Its function is as follows. Involved in oxygen transport from the lung to the various peripheral tissues. In Scalopus aquaticus (Eastern mole), this protein is Hemoglobin subunit beta (HBB).